We begin with the raw amino-acid sequence, 528 residues long: Galactokinase (528 aa).

Residues Arg-53, Glu-59, His-60, and Asp-62 each coordinate alpha-D-galactose. ATP contacts are provided by Gly-165, Gly-167, Ser-169, and Ser-170. Alpha-D-galactose-binding residues include Asn-213 and Asp-217. Asp-217 serves as the catalytic Proton acceptor. The ATP site is built by Ser-264, Asn-265, and Lys-266. An alpha-D-galactose-binding site is contributed by Tyr-274. A Phosphoserine modification is found at Ser-381.

Belongs to the GHMP kinase family. GalK subfamily.

The enzyme catalyses alpha-D-galactose + ATP = alpha-D-galactose 1-phosphate + ADP + H(+). It functions in the pathway carbohydrate metabolism; galactose metabolism. Functionally, galactokinase is a key enzyme in the galactose metabolism where it catalyzes the conversion of alpha-D-galactose to galactose 1-phosphate. Can also induce the transcription of the yeast GAL genes in response to the organism being challenged with galactose as the sole source of carbon. It's striking amino acid sequence similarity to GAL3 might explain its GAL3-like induction activity. The chain is Galactokinase from Saccharomyces cerevisiae (strain ATCC 204508 / S288c) (Baker's yeast).